The following is a 576-amino-acid chain: Insulin-like growth factor 2 mRNA-binding protein 1 (576 aa).

RRM domains are found at residues 2 to 75 and 81 to 156; these read NKLY…HSVP and RKIQ…YIPD. A disordered region spans residues 158-189; it reads QSVQGPENGRRGGFGARGAPRQGSPVTAGAPV. 2 KH domains span residues 195–260 and 276–343; these read DIPL…CKMI and EVPL…EQEI. Tyrosine 396 is modified (phosphotyrosine; by SRC). 2 KH domains span residues 404–469 and 486–552; these read QETV…QGRI and KLET…QRKI.

It belongs to the RRM IMP/VICKZ family. Can form homooligomers and heterooligomers with IGF2BP1 and IGF2BP3 in an RNA-dependent manner. Associates with the cytoskeleton, predominantly with actin filament bundles and occasionally with microtubules. In a heterologous system, interacts with ELAVL1, DHX9 and HNRNPU. Post-translationally, phosphorylated by SRC at Tyr-396. This residue is involved in ACTB mRNA binding, its phosphorylation impairs association with ACTB mRNA and hence abolishes translational repression. Phosphorylation occurs in close proximity to filopodia and in the growth cones of differentiated neuroglioblastoma cells. In terms of tissue distribution, expressed in neurons and embryonic fibroblasts (at protein level).

Its subcellular location is the nucleus. It is found in the cytoplasm. The protein resides in the perinuclear region. It localises to the P-body. The protein localises to the stress granule. Its subcellular location is the cell projection. It is found in the growth cone. The protein resides in the filopodium. It localises to the lamellipodium. RNA-binding factor that recruits target transcripts to cytoplasmic protein-RNA complexes (mRNPs). This transcript 'caging' into mRNPs allows mRNA transport and transient storage. It also modulates the rate and location at which target transcripts encounter the translational apparatus and shields them from endonuclease attacks or microRNA-mediated degradation. Preferentially binds to N6-methyladenosine (m6A)-containing mRNAs and increases their stability. Plays a direct role in the transport and translation of transcripts required for axonal regeneration in adult sensory neurons. Regulates localized beta-actin/ACTB mRNA translation in polarized cells, a crucial process for cell migration and neurite outgrowth. Co-transcriptionally associates with the ACTB mRNA in the nucleus. This binding involves by a conserved 54-nucleotide element in the ACTB mRNA 3'-UTR, known as the 'zipcode'. The ribonucleoparticle (RNP) thus formed is exported to the cytoplasm, binds to a motor protein and is transported along the cytoskeleton to the cell periphery. During transport, IGF2BP1 prevents beta-actin mRNA from being translated into protein. When the RNP complex reaches its destination near the plasma membrane, IGF2BP1 is phosphorylated by SRC. This releases the mRNA, allowing ribosomal 40S and 60S subunits to assemble and initiate ACTB protein synthesis. The monomeric ACTB protein then assembles into the subcortical actin cytoskeleton, which pushes the leading edge onwards. Binds MYC mRNA. Binding to MYC mRNA is enhanced by m6A-modification of the CRD. Promotes the directed movement of cells by fine-tuning intracellular signaling networks. Binds to MAPK4 3'-UTR and inhibits its translation. Interacts with PTEN transcript open reading frame (ORF) and prevents mRNA decay. This combined action on MAPK4 (down-regulation) and PTEN (up-regulation) antagonizes HSPB1 phosphorylation, consequently it prevents G-actin sequestration by phosphorylated HSPB1, allowing F-actin polymerization. Hence enhances the velocity of cell migration and stimulates directed cell migration by PTEN-modulated polarization. This is Insulin-like growth factor 2 mRNA-binding protein 1 (IGF2BP1) from Gallus gallus (Chicken).